The sequence spans 183 residues: uncharacterized protein (183 aa).

Helical transmembrane passes span 37-59, 79-98, 110-132, and 142-161; these read LFGY…PRQF, AILL…VTSV, WRTF…VLVL, and AFYA…TYVF.

The protein localises to the cell membrane. This is an uncharacterized protein from Archaeoglobus fulgidus (strain ATCC 49558 / DSM 4304 / JCM 9628 / NBRC 100126 / VC-16).